Here is a 121-residue protein sequence, read N- to C-terminus: Large ribosomal subunit protein eL31 (121 aa).

The protein belongs to the eukaryotic ribosomal protein eL31 family.

The protein is Large ribosomal subunit protein eL31 (RPL31) of Panax ginseng (Korean ginseng).